The chain runs to 361 residues: Probable mannose-1-phosphate guanylyltransferase 2 (361 aa).

Leu-6 and Val-7 together coordinate GDP-alpha-D-mannose. Residues Gly-9, Gly-11, Thr-12, Arg-13, and Lys-23 each contribute to the diphosphate site. Positions 85, 109, 111, 146, and 173 each coordinate GDP-alpha-D-mannose.

The protein belongs to the transferase hexapeptide repeat family.

The catalysed reaction is alpha-D-mannose 1-phosphate + GTP + H(+) = GDP-alpha-D-mannose + diphosphate. It functions in the pathway nucleotide-sugar biosynthesis; GDP-alpha-D-mannose biosynthesis; GDP-alpha-D-mannose from alpha-D-mannose 1-phosphate (GTP route): step 1/1. Catalyzes a reaction of the Smirnoff-Wheeler pathway, the major route to ascorbate biosynthesis in plants. The polypeptide is Probable mannose-1-phosphate guanylyltransferase 2 (Oryza sativa subsp. japonica (Rice)).